The chain runs to 273 residues: Large ribosomal subunit protein uL2 (273 aa).

The disordered stretch occupies residues R221–K273.

It belongs to the universal ribosomal protein uL2 family. As to quaternary structure, part of the 50S ribosomal subunit. Forms a bridge to the 30S subunit in the 70S ribosome.

Functionally, one of the primary rRNA binding proteins. Required for association of the 30S and 50S subunits to form the 70S ribosome, for tRNA binding and peptide bond formation. It has been suggested to have peptidyltransferase activity; this is somewhat controversial. Makes several contacts with the 16S rRNA in the 70S ribosome. The protein is Large ribosomal subunit protein uL2 of Sodalis glossinidius (strain morsitans).